The chain runs to 165 residues: MDALRLPRRPGVLLPKLILLFVYAGDCLAQCGKECHSYCCDGSTPYCCSYYAYIGNILSGTAIAGIVFGIVFIMGVIAGIAICICMCMKNNRGTRVGVIRAAHINAISYPMAPPPYTYDHEMEYRTDLPPPYSAAPQASAQRSPPPPYPGNPRKYSSSQNRIRDN.

An N-terminal signal peptide occupies residues 1 to 29; sequence MDALRLPRRPGVLLPKLILLFVYAGDCLA. The Extracellular segment spans residues 30-61; sequence QCGKECHSYCCDGSTPYCCSYYAYIGNILSGT. The chain crosses the membrane as a helical span at residues 62–82; the sequence is AIAGIVFGIVFIMGVIAGIAI. Residues 83–165 are Cytoplasmic-facing; sequence CICMCMKNNR…SSSQNRIRDN (83 aa). The disordered stretch occupies residues 125–165; that stretch reads RTDLPPPYSAAPQASAQRSPPPPYPGNPRKYSSSQNRIRDN. Residues 154 to 165 are compositionally biased toward polar residues; the sequence is KYSSSQNRIRDN.

Belongs to the CYYR1 family.

It is found in the membrane. This is Cysteine and tyrosine-rich protein 1 (Cyyr1) from Mus musculus (Mouse).